A 332-amino-acid chain; its full sequence is DNA-directed RNA polymerase subunit alpha (332 aa).

Residues 1-244 form an alpha N-terminal domain (alpha-NTD) region; the sequence is MKKHAKVYYS…AHLNLLADVE (244 aa). Residues 259-332 are alpha C-terminal domain (alpha-CTD); it reads IKEEPIRRFS…NYKNENKGEN (74 aa).

The protein belongs to the RNA polymerase alpha chain family. Homodimer. The RNAP catalytic core consists of 2 alpha, 1 beta, 1 beta' and 1 omega subunit. When a sigma factor is associated with the core the holoenzyme is formed, which can initiate transcription.

The enzyme catalyses RNA(n) + a ribonucleoside 5'-triphosphate = RNA(n+1) + diphosphate. Functionally, DNA-dependent RNA polymerase catalyzes the transcription of DNA into RNA using the four ribonucleoside triphosphates as substrates. In Mesomycoplasma hyopneumoniae (strain 232) (Mycoplasma hyopneumoniae), this protein is DNA-directed RNA polymerase subunit alpha.